The primary structure comprises 214 residues: Cytochrome c biogenesis ATP-binding export protein CcmA (214 aa).

Residues 12-214 form the ABC transporter domain; that stretch reads LAAHDLAFSR…TRMLTLEVAA (203 aa). 44-51 contributes to the ATP binding site; it reads GDNGAGKT.

This sequence belongs to the ABC transporter superfamily. CcmA exporter (TC 3.A.1.107) family. In terms of assembly, the complex is composed of two ATP-binding proteins (CcmA) and two transmembrane proteins (CcmB).

The protein localises to the cell inner membrane. It catalyses the reaction heme b(in) + ATP + H2O = heme b(out) + ADP + phosphate + H(+). Part of the ABC transporter complex CcmAB involved in the biogenesis of c-type cytochromes; once thought to export heme, this seems not to be the case, but its exact role is uncertain. Responsible for energy coupling to the transport system. This is Cytochrome c biogenesis ATP-binding export protein CcmA from Xanthomonas axonopodis pv. citri (strain 306).